The following is a 75-amino-acid chain: Putative snRNP Sm-like protein (75 aa).

The region spanning 4-75 (RPLDVIHRSL…NVLAISPTEE (72 aa)) is the Sm domain.

This sequence belongs to the snRNP Sm proteins family.

In Pyrococcus abyssi (strain GE5 / Orsay), this protein is Putative snRNP Sm-like protein.